Reading from the N-terminus, the 382-residue chain is Galactokinase (382 aa).

A substrate-binding site is contributed by 34-37; sequence EHTD. Residue 124–130 coordinates ATP; that stretch reads GAGLSSS. The Mg(2+) site is built by S130 and E162. Residue D174 is the Proton acceptor of the active site. Position 223 (Y223) interacts with substrate.

This sequence belongs to the GHMP kinase family. GalK subfamily.

It is found in the cytoplasm. The enzyme catalyses alpha-D-galactose + ATP = alpha-D-galactose 1-phosphate + ADP + H(+). Its pathway is carbohydrate metabolism; galactose metabolism. Functionally, catalyzes the transfer of the gamma-phosphate of ATP to D-galactose to form alpha-D-galactose-1-phosphate (Gal-1-P). The sequence is that of Galactokinase from Enterobacter sp. (strain 638).